We begin with the raw amino-acid sequence, 425 residues long: Phosphoribosylamine--glycine ligase (425 aa).

The region spanning 107-312 (KDLCARYNIP…LLVLLNAAVD (206 aa)) is the ATP-grasp domain. 133-193 (VDQTGAPIVI…EEFMTGEEAS (61 aa)) contacts ATP. The disordered stretch occupies residues 214 to 233 (RVGDGDVGPNTGGMGAYSPA). Glutamate 282 and asparagine 284 together coordinate Mg(2+).

Belongs to the GARS family. Requires Mg(2+) as cofactor. The cofactor is Mn(2+).

The enzyme catalyses 5-phospho-beta-D-ribosylamine + glycine + ATP = N(1)-(5-phospho-beta-D-ribosyl)glycinamide + ADP + phosphate + H(+). It functions in the pathway purine metabolism; IMP biosynthesis via de novo pathway; N(1)-(5-phospho-D-ribosyl)glycinamide from 5-phospho-alpha-D-ribose 1-diphosphate: step 2/2. The polypeptide is Phosphoribosylamine--glycine ligase (Mesorhizobium japonicum (strain LMG 29417 / CECT 9101 / MAFF 303099) (Mesorhizobium loti (strain MAFF 303099))).